A 366-amino-acid chain; its full sequence is Pyruvate dehydrogenase E1 component subunit beta, mitochondrial (366 aa).

Residues Met-1–Phe-33 constitute a mitochondrion transit peptide. Glu-95 is a thiamine diphosphate binding site. K(+) contacts are provided by Ala-196, Ile-197, Asp-199, and Asn-201.

In terms of assembly, pyruvate dehydrogenase (E1) is a tetramer of 2 alpha and 2 beta subunits. Eukaryotic pyruvate dehydrogenase (PDH) complexes are organized as a core consisting of the oligomeric dihydrolipoamide acetyl-transferase (E2), around which are arranged multiple copies of pyruvate dehydrogenase (E1), dihydrolipoamide dehydrogenase (E3) and protein X (E3BP) bound by non-covalent bonds. Requires thiamine diphosphate as cofactor.

It localises to the mitochondrion matrix. The enzyme catalyses N(6)-[(R)-lipoyl]-L-lysyl-[protein] + pyruvate + H(+) = N(6)-[(R)-S(8)-acetyldihydrolipoyl]-L-lysyl-[protein] + CO2. Its function is as follows. The pyruvate dehydrogenase complex catalyzes the overall conversion of pyruvate to acetyl-CoA and CO(2). The protein is Pyruvate dehydrogenase E1 component subunit beta, mitochondrial (PDB1) of Saccharomyces cerevisiae (strain ATCC 204508 / S288c) (Baker's yeast).